Here is a 684-residue protein sequence, read N- to C-terminus: Threonine--tRNA ligase (684 aa).

The 66-residue stretch at 1 to 66 (MTVPATDSWP…DTDAEVVPVA (66 aa)) folds into the TGS domain. The segment at 261–567 (DHRKLGSELD…LTEHYAGAFP (307 aa)) is catalytic. Residues Cys366, His417, and His544 each coordinate Zn(2+).

This sequence belongs to the class-II aminoacyl-tRNA synthetase family. Homodimer. Requires Zn(2+) as cofactor.

The protein localises to the cytoplasm. The enzyme catalyses tRNA(Thr) + L-threonine + ATP = L-threonyl-tRNA(Thr) + AMP + diphosphate + H(+). Functionally, catalyzes the attachment of threonine to tRNA(Thr) in a two-step reaction: L-threonine is first activated by ATP to form Thr-AMP and then transferred to the acceptor end of tRNA(Thr). Also edits incorrectly charged L-seryl-tRNA(Thr). This is Threonine--tRNA ligase from Mycobacterium avium (strain 104).